A 378-amino-acid polypeptide reads, in one-letter code: Mannitol-1-phosphate 5-dehydrogenase (378 aa).

4 to 15 (SVHFGAGNIGRG) is a binding site for NAD(+).

The protein belongs to the mannitol dehydrogenase family.

It carries out the reaction D-mannitol 1-phosphate + NAD(+) = beta-D-fructose 6-phosphate + NADH + H(+). This is Mannitol-1-phosphate 5-dehydrogenase from Streptococcus pneumoniae (strain Hungary19A-6).